A 94-amino-acid polypeptide reads, in one-letter code: Endoribonuclease VapD 2 (94 aa).

This sequence belongs to the VapD ribonuclease family. Homodimer.

Functionally, cleaves ssRNA, mostly between U:A. The chain is Endoribonuclease VapD 2 from Riemerella anatipestifer (Moraxella anatipestifer).